We begin with the raw amino-acid sequence, 1392 residues long: DNA-directed RNA polymerase subunit beta'' (1392 aa).

Residues C224, C295, C302, and C305 each contribute to the Zn(2+) site.

This sequence belongs to the RNA polymerase beta' chain family. RpoC2 subfamily. In terms of assembly, in plastids the minimal PEP RNA polymerase catalytic core is composed of four subunits: alpha, beta, beta', and beta''. When a (nuclear-encoded) sigma factor is associated with the core the holoenzyme is formed, which can initiate transcription. It depends on Zn(2+) as a cofactor.

It is found in the plastid. Its subcellular location is the chloroplast. It carries out the reaction RNA(n) + a ribonucleoside 5'-triphosphate = RNA(n+1) + diphosphate. Its function is as follows. DNA-dependent RNA polymerase catalyzes the transcription of DNA into RNA using the four ribonucleoside triphosphates as substrates. This Solanum bulbocastanum (Wild potato) protein is DNA-directed RNA polymerase subunit beta''.